Here is a 208-residue protein sequence, read N- to C-terminus: Ciliary-associated calcium-binding coiled-coil protein 1 (208 aa).

In terms of tissue distribution, testis-specific. Expressed in spermatocytes and round spermatids (at protein level).

It is found in the cytoplasm. Its subcellular location is the cytoskeleton. It localises to the microtubule organizing center. The protein localises to the centrosome. The protein resides in the cell projection. It is found in the cilium. Its subcellular location is the flagellum. Its function is as follows. Calcium-binding protein. May be involved in the control of sperm flagellar movement. The polypeptide is Ciliary-associated calcium-binding coiled-coil protein 1 (Mus musculus (Mouse)).